The following is a 249-amino-acid chain: Hydroxyacylglutathione hydrolase (249 aa).

Zn(2+)-binding residues include histidine 53, histidine 55, aspartate 57, histidine 58, histidine 110, aspartate 127, and histidine 165.

It belongs to the metallo-beta-lactamase superfamily. Glyoxalase II family. In terms of assembly, monomer. The cofactor is Zn(2+).

It carries out the reaction an S-(2-hydroxyacyl)glutathione + H2O = a 2-hydroxy carboxylate + glutathione + H(+). Its pathway is secondary metabolite metabolism; methylglyoxal degradation; (R)-lactate from methylglyoxal: step 2/2. Functionally, thiolesterase that catalyzes the hydrolysis of S-D-lactoyl-glutathione to form glutathione and D-lactic acid. The chain is Hydroxyacylglutathione hydrolase from Hamiltonella defensa subsp. Acyrthosiphon pisum (strain 5AT).